The following is a 560-amino-acid chain: Dimethylaniline monooxygenase [N-oxide-forming] 4 (560 aa).

Residues 9–13 (GAGVS), E32, and 40–41 (LW) contribute to the FAD site. Residues 60 to 61 (TN) and 195 to 198 (TGGD) contribute to the NADP(+) site. A helical membrane pass occupies residues 519–539 (APVLIVSLLLIYKSSLFLELV).

The protein belongs to the FMO family. Requires FAD as cofactor. Detected in liver and kidney (at protein level).

It localises to the microsome membrane. It is found in the endoplasmic reticulum membrane. The catalysed reaction is N,N-dimethylaniline + NADPH + O2 + H(+) = N,N-dimethylaniline N-oxide + NADP(+) + H2O. Its function is as follows. This protein is involved in the oxidative metabolism of a variety of xenobiotics such as drugs and pesticides. The sequence is that of Dimethylaniline monooxygenase [N-oxide-forming] 4 (Fmo4) from Rattus norvegicus (Rat).